Reading from the N-terminus, the 371-residue chain is DNA primase DnaG (371 aa).

Positions 173–248 constitute a Toprim domain; sequence DEIILVEGRA…DIDYVAVAPP (76 aa). E179, D221, and D223 together coordinate Mg(2+).

It belongs to the archaeal DnaG primase family. In terms of assembly, forms a ternary complex with MCM helicase and DNA. Component of the archaeal exosome complex. Requires Mg(2+) as cofactor.

The catalysed reaction is ssDNA + n NTP = ssDNA/pppN(pN)n-1 hybrid + (n-1) diphosphate.. Its function is as follows. RNA polymerase that catalyzes the synthesis of short RNA molecules used as primers for DNA polymerase during DNA replication. Also part of the exosome, which is a complex involved in RNA degradation. Acts as a poly(A)-binding protein that enhances the interaction between heteromeric, adenine-rich transcripts and the exosome. In Nanoarchaeum equitans (strain Kin4-M), this protein is DNA primase DnaG.